A 60-amino-acid polypeptide reads, in one-letter code: Large ribosomal subunit protein bL32 (60 aa).

A disordered region spans residues 1 to 60; the sequence is MAVQQNKKSPSKRGMHRSHDFLVNPSTAIEPTTGETHLRHHISPNGFYRGRKVLKTKADE. Residues 24-35 are compositionally biased toward polar residues; sequence NPSTAIEPTTGE. The span at 49 to 60 shows a compositional bias: basic residues; it reads RGRKVLKTKADE.

Belongs to the bacterial ribosomal protein bL32 family.

This is Large ribosomal subunit protein bL32 from Bordetella petrii (strain ATCC BAA-461 / DSM 12804 / CCUG 43448).